The chain runs to 230 residues: uncharacterized protein (230 aa).

To E.coli HemX N-terminal region.

This is an uncharacterized protein from Haemophilus influenzae (strain ATCC 51907 / DSM 11121 / KW20 / Rd).